Here is a 70-residue protein sequence, read N- to C-terminus: MGKNNSGSRNEVLVRGAEQALDQMKYEIAQEFGVQLGADTTARSNGSVGGEITKRLVAMAEQQLGGRANR.

This sequence belongs to the alpha/beta-type SASP family.

Functionally, SASP are bound to spore DNA. They are double-stranded DNA-binding proteins that cause DNA to change to an a-like conformation. They protect the DNA backbone from chemical and enzymatic cleavage and are thus involved in dormant spore's high resistance to UV light. This is Small, acid-soluble spore protein 1 (sasP-1) from Bacillus cereus.